A 34-amino-acid polypeptide reads, in one-letter code: Photosystem II reaction center protein M (34 aa).

Residues 5 to 25 (ILAFIATALFILIPTAFSLIL) traverse the membrane as a helical segment.

Belongs to the PsbM family. In terms of assembly, PSII is composed of 1 copy each of membrane proteins PsbA, PsbB, PsbC, PsbD, PsbE, PsbF, PsbH, PsbI, PsbJ, PsbK, PsbL, PsbM, PsbT, PsbX, PsbY, PsbZ, Psb30/Ycf12, at least 3 peripheral proteins of the oxygen-evolving complex and a large number of cofactors. It forms dimeric complexes.

It is found in the plastid. It localises to the chloroplast thylakoid membrane. In terms of biological role, one of the components of the core complex of photosystem II (PSII). PSII is a light-driven water:plastoquinone oxidoreductase that uses light energy to abstract electrons from H(2)O, generating O(2) and a proton gradient subsequently used for ATP formation. It consists of a core antenna complex that captures photons, and an electron transfer chain that converts photonic excitation into a charge separation. This subunit is found at the monomer-monomer interface. The protein is Photosystem II reaction center protein M of Huperzia lucidula (Shining clubmoss).